The chain runs to 343 residues: Phosphatidylglycerol--prolipoprotein diacylglyceryl transferase 1 (343 aa).

Helical transmembrane passes span 19–39 (VPLR…VWLG), 54–74 (ADIA…YHVI), 93–113 (IWEG…GAWI), and 119–139 (GVPM…AQAI). Arginine 141 contributes to the a 1,2-diacyl-sn-glycero-3-phospho-(1'-sn-glycerol) binding site. 3 consecutive transmembrane segments (helical) span residues 176–196 (HPTF…VIWA), 202–224 (LGHG…WIEY), and 238–258 (LNNW…VLSA). Positions 269 to 343 (EPGAETAAGD…TNGADSAKKG (75 aa)) are disordered. Residues 283–293 (ADKDVKGTKDA) show a composition bias toward basic and acidic residues. A compositionally biased stretch (acidic residues) spans 314–324 (APEDTSGADEA).

Belongs to the Lgt family.

The protein resides in the cell membrane. It catalyses the reaction L-cysteinyl-[prolipoprotein] + a 1,2-diacyl-sn-glycero-3-phospho-(1'-sn-glycerol) = an S-1,2-diacyl-sn-glyceryl-L-cysteinyl-[prolipoprotein] + sn-glycerol 1-phosphate + H(+). Its pathway is protein modification; lipoprotein biosynthesis (diacylglyceryl transfer). Catalyzes the transfer of the diacylglyceryl group from phosphatidylglycerol to the sulfhydryl group of the N-terminal cysteine of a prolipoprotein, the first step in the formation of mature lipoproteins. This chain is Phosphatidylglycerol--prolipoprotein diacylglyceryl transferase 1, found in Streptomyces coelicolor (strain ATCC BAA-471 / A3(2) / M145).